Consider the following 249-residue polypeptide: Secreted flagellin C (249 aa).

Post-translationally, the secreted form is about 1 kDa larger than the whole cell lysate form, presumably due to post-translational modification. A 22 kDa form is also found in the secreted fraction, probably resulting from proteolysis.

The protein localises to the secreted. It localises to the host cell surface. In terms of biological role, plays a role in virulence. The polypeptide is Secreted flagellin C (flaC) (Campylobacter jejuni subsp. jejuni serotype O:2 (strain ATCC 700819 / NCTC 11168)).